Reading from the N-terminus, the 121-residue chain is Prefoldin subunit beta (121 aa).

It belongs to the prefoldin subunit beta family. As to quaternary structure, heterohexamer of two alpha and four beta subunits.

Its subcellular location is the cytoplasm. Molecular chaperone capable of stabilizing a range of proteins. Seems to fulfill an ATP-independent, HSP70-like function in archaeal de novo protein folding. In Caldivirga maquilingensis (strain ATCC 700844 / DSM 13496 / JCM 10307 / IC-167), this protein is Prefoldin subunit beta.